Reading from the N-terminus, the 405-residue chain is Argininosuccinate synthase (405 aa).

Residues 10–18 (AYSGGLDTS) and Ala37 contribute to the ATP site. The L-citrulline site is built by Tyr88 and Ser93. Residue Gly118 participates in ATP binding. 3 residues coordinate L-aspartate: Thr120, Asn124, and Asp125. Residue Asn124 coordinates L-citrulline. Residues Arg128, Ser179, Ser188, Glu264, and Tyr276 each coordinate L-citrulline.

It belongs to the argininosuccinate synthase family. Type 1 subfamily. Homotetramer.

It localises to the cytoplasm. It catalyses the reaction L-citrulline + L-aspartate + ATP = 2-(N(omega)-L-arginino)succinate + AMP + diphosphate + H(+). The protein operates within amino-acid biosynthesis; L-arginine biosynthesis; L-arginine from L-ornithine and carbamoyl phosphate: step 2/3. The sequence is that of Argininosuccinate synthase from Pseudomonas fluorescens (strain Pf0-1).